Here is a 728-residue protein sequence, read N- to C-terminus: Homoaconitase, mitochondrial (728 aa).

A mitochondrion-targeting transit peptide spans 1-24; the sequence is MVAIPRLARLSVPAWALSARGRFY. [4Fe-4S] cluster contacts are provided by C362, C422, and C425.

Belongs to the aconitase/IPM isomerase family. [4Fe-4S] cluster is required as a cofactor.

It is found in the mitochondrion. It carries out the reaction (2R,3S)-homoisocitrate = cis-homoaconitate + H2O. It functions in the pathway amino-acid biosynthesis; L-lysine biosynthesis via AAA pathway; L-alpha-aminoadipate from 2-oxoglutarate: step 3/5. Functionally, catalyzes the reversible hydration of cis-homoaconitate to (2R,3S)-homoisocitrate, a step in the alpha-aminoadipate pathway for lysine biosynthesis. The chain is Homoaconitase, mitochondrial (LYS4) from Cryptococcus neoformans var. neoformans serotype D (strain B-3501A) (Filobasidiella neoformans).